The primary structure comprises 201 residues: 3-isopropylmalate dehydratase small subunit (201 aa).

It belongs to the LeuD family. LeuD type 1 subfamily. As to quaternary structure, heterodimer of LeuC and LeuD.

It catalyses the reaction (2R,3S)-3-isopropylmalate = (2S)-2-isopropylmalate. Its pathway is amino-acid biosynthesis; L-leucine biosynthesis; L-leucine from 3-methyl-2-oxobutanoate: step 2/4. Functionally, catalyzes the isomerization between 2-isopropylmalate and 3-isopropylmalate, via the formation of 2-isopropylmaleate. The chain is 3-isopropylmalate dehydratase small subunit from Shewanella pealeana (strain ATCC 700345 / ANG-SQ1).